The sequence spans 447 residues: Eukaryotic translation initiation factor 3 subunit E (447 aa).

Positions 253 to 421 (LELFFNAGYI…GTVVMNHPPS (169 aa)) constitute a PCI domain.

Belongs to the eIF-3 subunit E family. As to quaternary structure, component of the eukaryotic translation initiation factor 3 (eIF-3) complex.

The protein resides in the cytoplasm. Its function is as follows. Component of the eukaryotic translation initiation factor 3 (eIF-3) complex, which is involved in protein synthesis of a specialized repertoire of mRNAs and, together with other initiation factors, stimulates binding of mRNA and methionyl-tRNAi to the 40S ribosome. The eIF-3 complex specifically targets and initiates translation of a subset of mRNAs involved in cell proliferation. This is Eukaryotic translation initiation factor 3 subunit E from Chaetomium globosum (strain ATCC 6205 / CBS 148.51 / DSM 1962 / NBRC 6347 / NRRL 1970) (Soil fungus).